A 265-amino-acid chain; its full sequence is Sulfur carrier protein FdhD (265 aa).

Residue cysteine 107 is the Cysteine persulfide intermediate of the active site.

It belongs to the FdhD family.

Its subcellular location is the cytoplasm. Its function is as follows. Required for formate dehydrogenase (FDH) activity. Acts as a sulfur carrier protein that transfers sulfur from IscS to the molybdenum cofactor prior to its insertion into FDH. In Staphylococcus aureus (strain MRSA252), this protein is Sulfur carrier protein FdhD.